Consider the following 159-residue polypeptide: ATP synthase subunit b 2 (159 aa).

A helical transmembrane segment spans residues 1 to 21 (MDATFWALVALIIFVGILLYM).

It belongs to the ATPase B chain family. As to quaternary structure, F-type ATPases have 2 components, F(1) - the catalytic core - and F(0) - the membrane proton channel. F(1) has five subunits: alpha(3), beta(3), gamma(1), delta(1), epsilon(1). F(0) has three main subunits: a(1), b(2) and c(10-14). The alpha and beta chains form an alternating ring which encloses part of the gamma chain. F(1) is attached to F(0) by a central stalk formed by the gamma and epsilon chains, while a peripheral stalk is formed by the delta and b chains.

The protein localises to the cell inner membrane. In terms of biological role, f(1)F(0) ATP synthase produces ATP from ADP in the presence of a proton or sodium gradient. F-type ATPases consist of two structural domains, F(1) containing the extramembraneous catalytic core and F(0) containing the membrane proton channel, linked together by a central stalk and a peripheral stalk. During catalysis, ATP synthesis in the catalytic domain of F(1) is coupled via a rotary mechanism of the central stalk subunits to proton translocation. Its function is as follows. Component of the F(0) channel, it forms part of the peripheral stalk, linking F(1) to F(0). The protein is ATP synthase subunit b 2 of Chelativorans sp. (strain BNC1).